The sequence spans 414 residues: MATNSSSGSLVRHKTRQVRVGRISIGSNAPVVVQSMTNTDTVDVLGTAMQVAELARAGSELVRITVNNEAAAKAVPHIRDRLLALNVDVPLVGDFHYNGHKLLSEHPACAEALAKLRINPGNVGAGAKRDPQFAAIVDIACRHDKPVRIGVNWGSLDPSVLARVMDQNAKLAQPRDANAVMREALVVSALESAAKAEEYGLGGDRIILSAKVSSVQDLIAVYRDLAARCDYPLHLGLTEAGMGSKGIVASTAALAVLLQEGIGDTIRISLTPEPNGSRAQEVVVAQEILQTMGLRAFTPMVIACPGCGRTTSTFFQELASGIQSYVRDQMPVWREQYDGVENMTVAVMGCVVNGPGESKHANIGISLPGTGETPAAPVFVDGEKTVTLRGDNIGTEFKAIVDDYVATRYVKKAG.

The [4Fe-4S] cluster site is built by cysteine 304, cysteine 307, cysteine 350, and glutamate 357.

This sequence belongs to the IspG family. [4Fe-4S] cluster serves as cofactor.

The catalysed reaction is (2E)-4-hydroxy-3-methylbut-2-enyl diphosphate + oxidized [flavodoxin] + H2O + 2 H(+) = 2-C-methyl-D-erythritol 2,4-cyclic diphosphate + reduced [flavodoxin]. The protein operates within isoprenoid biosynthesis; isopentenyl diphosphate biosynthesis via DXP pathway; isopentenyl diphosphate from 1-deoxy-D-xylulose 5-phosphate: step 5/6. Converts 2C-methyl-D-erythritol 2,4-cyclodiphosphate (ME-2,4cPP) into 1-hydroxy-2-methyl-2-(E)-butenyl 4-diphosphate. The protein is 4-hydroxy-3-methylbut-2-en-1-yl diphosphate synthase (flavodoxin) of Aromatoleum aromaticum (strain DSM 19018 / LMG 30748 / EbN1) (Azoarcus sp. (strain EbN1)).